The sequence spans 235 residues: H2HPP isomerase (235 aa).

Cupin type-2 domains lie at 41–106 (VPPH…AIDI) and 151–216 (KIPG…KSIN). Residues histidine 50, histidine 52, glutamine 56, histidine 91, histidine 162, histidine 164, glutamine 168, and histidine 202 each coordinate a divalent metal cation. Position 223 (tyrosine 223) interacts with substrate.

In terms of assembly, monomer. Fe(2+) serves as cofactor. Requires Co(2+) as cofactor.

The protein localises to the cytoplasm. The catalysed reaction is 3-[(4R)-4-hydroxycyclohexa-1,5-dien-1-yl]-2-oxopropanoate = 3-[(1E,4R)-4-hydroxycyclohex-2-en-1-ylidene]pyruvate. The protein operates within antibiotic biosynthesis; bacilysin biosynthesis. Functionally, part of the bacABCDEF operon responsible for the biosynthesis of the nonribosomally synthesized dipeptide antibiotic bacilysin, composed of L-alanine and L-anticapsin. Bacilysin is an irreversible inactivator of the glutaminase domain of glucosamine synthetase. BacB catalyzes the allylic isomerization of the endocyclic-delta(4),delta(8)-7R-dihydro-hydroxyphenylpyruvate (en-H2HPP) to generate a mixture of 3E,7R- and 3Z, 7R-olefins (E/Z ration of 3/1) of the exocyclic-delta(3),delta(5)-dihydro-hydroxyphenylpyruvate (ex-H2HPP). This Bacillus subtilis (strain 168) protein is H2HPP isomerase.